The chain runs to 405 residues: Octaketide synthase 3 (405 aa).

A compositionally biased stretch (polar residues) spans 1-10; it reads MGSIAESSPL. A disordered region spans residues 1 to 22; the sequence is MGSIAESSPLMSRENVEGIRKA. The active site involves cysteine 176. CoA is bound by residues serine 283 and 320-323; that span reads GGRA.

The protein belongs to the thiolase-like superfamily. Chalcone/stilbene synthases family. In terms of assembly, homodimer.

The protein operates within secondary metabolite biosynthesis; flavonoid biosynthesis. Its function is as follows. Catalyzes the iterative condensations of 8 molecules of malonyl-CoA to produce aromatic octaketides, SEK4 and SEK4b, the products of the minimal polyketide synthase for the benzoisochromanequinone actinorhodin. May be involved in the biosynthesis of the octaketide barbaloin. The protein is Octaketide synthase 3 (PKS5) of Aloe arborescens (Kidachi aloe).